The chain runs to 416 residues: Gamma-glutamyl phosphate reductase (416 aa).

This sequence belongs to the gamma-glutamyl phosphate reductase family.

The protein resides in the cytoplasm. The enzyme catalyses L-glutamate 5-semialdehyde + phosphate + NADP(+) = L-glutamyl 5-phosphate + NADPH + H(+). It functions in the pathway amino-acid biosynthesis; L-proline biosynthesis; L-glutamate 5-semialdehyde from L-glutamate: step 2/2. Its function is as follows. Catalyzes the NADPH-dependent reduction of L-glutamate 5-phosphate into L-glutamate 5-semialdehyde and phosphate. The product spontaneously undergoes cyclization to form 1-pyrroline-5-carboxylate. The chain is Gamma-glutamyl phosphate reductase from Streptococcus thermophilus.